The following is a 132-amino-acid chain: Translation initiation factor 5A (132 aa).

The residue at position 36 (K36) is a Hypusine.

Belongs to the eIF-5A family.

Its subcellular location is the cytoplasm. Its function is as follows. Functions by promoting the formation of the first peptide bond. The polypeptide is Translation initiation factor 5A (eIF5A) (Desulfurococcus amylolyticus (strain DSM 18924 / JCM 16383 / VKM B-2413 / 1221n) (Desulfurococcus kamchatkensis)).